A 64-amino-acid chain; its full sequence is uncharacterized protein (64 aa).

This is an uncharacterized protein from Escherichia coli O157:H7.